The primary structure comprises 273 residues: Chlorophyll a-b binding protein 8, chloroplastic (273 aa).

The transit peptide at 1–32 (MATQALISSSSISTSAEAARQIIGSRISQSVT) directs the protein to the chloroplast. N2-acetylarginine is present on arginine 33. Residue tryptophan 56 participates in chlorophyll b binding. The chlorophyll a site is built by phenylalanine 76, serine 82, and glutamate 100. Position 105 (arginine 105) interacts with chlorophyll b. The helical transmembrane segment at 106–126 (FAMLGAAGAIAPEILGKAGLI) threads the bilayer. The chlorophyll b site is built by isoleucine 140, glutamate 167, and arginine 170. Lysine 224, glutamate 225, asparagine 228, arginine 230, glutamine 242, and histidine 257 together coordinate chlorophyll a. Residues 231 to 251 (LAMLAILGYFIQALVTGVGPY) form a helical membrane-spanning segment.

It belongs to the light-harvesting chlorophyll a/b-binding (LHC) protein family. As to quaternary structure, the LHC complex consists of chlorophyll a-b binding proteins. It depends on Binds at least 14 chlorophylls (8 Chl-a and 6 Chl-b) and carotenoids such as lutein and neoxanthin. as a cofactor. Post-translationally, photoregulated by reversible phosphorylation of its threonine residues.

The protein resides in the plastid. It localises to the chloroplast thylakoid membrane. In terms of biological role, the light-harvesting complex (LHC) functions as a light receptor, it captures and delivers excitation energy to photosystems with which it is closely associated. This is Chlorophyll a-b binding protein 8, chloroplastic (CAB8) from Solanum lycopersicum (Tomato).